The following is a 231-amino-acid chain: Monothiol glutaredoxin-6 (231 aa).

Positions 1-29 are cleaved as a signal peptide; the sequence is MIPSNKRNARILSITTLLLLLVFFVAQNA. One can recognise a Glutaredoxin domain in the interval 116–219; sequence QKEYSLILDL…ESLQVWSDGK (104 aa). Residue Cys136 coordinates [2Fe-2S] cluster.

This sequence belongs to the glutaredoxin family. Monothiol subfamily.

The protein resides in the vacuole. This chain is Monothiol glutaredoxin-6 (GRX6), found in Saccharomyces cerevisiae (strain ATCC 204508 / S288c) (Baker's yeast).